Here is a 711-residue protein sequence, read N- to C-terminus: Protein mono-ADP-ribosyltransferase PARP12 (711 aa).

3 consecutive C3H1-type zinc fingers follow at residues 103-128, 164-188, and 189-211; these read LCKFLIYGNCKFLKTGKNCRNGHNLK, ICLHYNKGDGPFGSCSFQKQCIKLH, and ICQYFLQGECKFGTSCKRSHEFT. Positions 247-279 are disordered; the sequence is SALSKVSPSPAGPQGSSERKDSSGPVSPGTPSQ. S268 bears the Phosphoserine mark. 2 consecutive C3H1-type zinc fingers follow at residues 280–307 and 281–306; these read EESEQICLYHIRKSCSFQEKCHRVHFHL and ESEQICLYHIRKSCSFQEKCHRVHFH. WWE domains follow at residues 308 to 371 and 374 to 468; these read PYRW…RLST and SVTK…KVCR. C484 is subject to ADP-ribosylcysteine. A PARP catalytic domain is found at 494–708; the sequence is IPDYWDPAAL…IFVALGNLFT (215 aa). Residues D610 and D621 each carry the ADP-ribosyl aspartic acid modification.

This sequence belongs to the ARTD/PARP family. Interacts with PARP11; this interaction plays a key role in zika virus suppression. Interacts with ISG15. In terms of processing, auto-mono-ADP-ribosylated. Post-translationally, phosphorylated by PRKD1.

It is found in the nucleus. It localises to the golgi apparatus. Its subcellular location is the trans-Golgi network. The protein localises to the cytoplasm. The protein resides in the stress granule. The catalysed reaction is L-aspartyl-[protein] + NAD(+) = 4-O-(ADP-D-ribosyl)-L-aspartyl-[protein] + nicotinamide. It carries out the reaction L-cysteinyl-[protein] + NAD(+) = S-(ADP-D-ribosyl)-L-cysteinyl-[protein] + nicotinamide + H(+). Its function is as follows. Mono-ADP-ribosyltransferase that mediates mono-ADP-ribosylation of target proteins. Displays anti-alphavirus activity during IFN-gamma immune activation by directly ADP-ribosylating the alphaviral non-structural proteins nsP3 and nsP4. Acts as a component of the PRKD1-driven regulatory cascade that selectively controls a major branch of the basolateral transport pathway by catalyzing the MARylation of GOLGA1. Acts also as a key regulator of mitochondrial function, protein translation, and inflammation. Inhibits PINK1/Parkin-dependent mitophagy and promotes cartilage degeneration by inhibiting the ubiquitination and SUMOylation of MFN1/2 by upregulating ISG15 and ISGylation. This chain is Protein mono-ADP-ribosyltransferase PARP12, found in Mus musculus (Mouse).